A 70-amino-acid polypeptide reads, in one-letter code: ATP synthase subunit epsilon, mitochondrial (70 aa).

Belongs to the eukaryotic ATPase epsilon family. F-type ATPases have 2 components, CF(1) - the catalytic core - and CF(0) - the membrane proton channel. CF(1) has five subunits: alpha(3), beta(3), gamma(1), delta(1), epsilon(1). CF(0) has three main subunits: a, b and c.

It localises to the mitochondrion. The protein localises to the mitochondrion inner membrane. In terms of biological role, mitochondrial membrane ATP synthase (F(1)F(0) ATP synthase or Complex V) produces ATP from ADP in the presence of a proton gradient across the membrane which is generated by electron transport complexes of the respiratory chain. F-type ATPases consist of two structural domains, F(1) - containing the extramembraneous catalytic core, and F(0) - containing the membrane proton channel, linked together by a central stalk and a peripheral stalk. During catalysis, ATP synthesis in the catalytic domain of F(1) is coupled via a rotary mechanism of the central stalk subunits to proton translocation. Part of the complex F(1) domain and of the central stalk which is part of the complex rotary element. Rotation of the central stalk against the surrounding alpha(3)beta(3) subunits leads to hydrolysis of ATP in three separate catalytic sites on the beta subunits. In Zea mays (Maize), this protein is ATP synthase subunit epsilon, mitochondrial.